A 215-amino-acid chain; its full sequence is Probable transaldolase 1 (215 aa).

The active-site Schiff-base intermediate with substrate is the Lys-83.

The protein belongs to the transaldolase family. Type 3B subfamily.

It localises to the cytoplasm. It carries out the reaction D-sedoheptulose 7-phosphate + D-glyceraldehyde 3-phosphate = D-erythrose 4-phosphate + beta-D-fructose 6-phosphate. It participates in carbohydrate degradation; pentose phosphate pathway; D-glyceraldehyde 3-phosphate and beta-D-fructose 6-phosphate from D-ribose 5-phosphate and D-xylulose 5-phosphate (non-oxidative stage): step 2/3. Functionally, transaldolase is important for the balance of metabolites in the pentose-phosphate pathway. The chain is Probable transaldolase 1 from Bacillus anthracis.